Reading from the N-terminus, the 508-residue chain is Histidine ammonia-lyase (508 aa).

A cross-link (5-imidazolinone (Ala-Gly)) is located at residues 143-145 (ASG). At serine 144 the chain carries 2,3-didehydroalanine (Ser).

It belongs to the PAL/histidase family. Post-translationally, contains an active site 4-methylidene-imidazol-5-one (MIO), which is formed autocatalytically by cyclization and dehydration of residues Ala-Ser-Gly.

It localises to the cytoplasm. The catalysed reaction is L-histidine = trans-urocanate + NH4(+). The protein operates within amino-acid degradation; L-histidine degradation into L-glutamate; N-formimidoyl-L-glutamate from L-histidine: step 1/3. The sequence is that of Histidine ammonia-lyase from Klebsiella pneumoniae subsp. pneumoniae (strain ATCC 700721 / MGH 78578).